Consider the following 169-residue polypeptide: Ribosome maturation factor RimM (169 aa).

In terms of domain architecture, PRC barrel spans 94-168 (DDEFYHADLI…RIVADPPEGL (75 aa)).

The protein belongs to the RimM family. Binds ribosomal protein uS19.

Its subcellular location is the cytoplasm. Its function is as follows. An accessory protein needed during the final step in the assembly of 30S ribosomal subunit, possibly for assembly of the head region. Essential for efficient processing of 16S rRNA. May be needed both before and after RbfA during the maturation of 16S rRNA. It has affinity for free ribosomal 30S subunits but not for 70S ribosomes. The sequence is that of Ribosome maturation factor RimM from Cereibacter sphaeroides (strain ATCC 17023 / DSM 158 / JCM 6121 / CCUG 31486 / LMG 2827 / NBRC 12203 / NCIMB 8253 / ATH 2.4.1.) (Rhodobacter sphaeroides).